The primary structure comprises 281 residues: Bifunctional protein FolD (281 aa).

NADP(+)-binding positions include 165–167 (GRG), Thr-192, and Val-233.

Belongs to the tetrahydrofolate dehydrogenase/cyclohydrolase family. In terms of assembly, homodimer.

The catalysed reaction is (6R)-5,10-methylene-5,6,7,8-tetrahydrofolate + NADP(+) = (6R)-5,10-methenyltetrahydrofolate + NADPH. It catalyses the reaction (6R)-5,10-methenyltetrahydrofolate + H2O = (6R)-10-formyltetrahydrofolate + H(+). It participates in one-carbon metabolism; tetrahydrofolate interconversion. Functionally, catalyzes the oxidation of 5,10-methylenetetrahydrofolate to 5,10-methenyltetrahydrofolate and then the hydrolysis of 5,10-methenyltetrahydrofolate to 10-formyltetrahydrofolate. This is Bifunctional protein FolD from Mycolicibacterium paratuberculosis (strain ATCC BAA-968 / K-10) (Mycobacterium paratuberculosis).